Reading from the N-terminus, the 558-residue chain is N-acetylglucosamine-6-O-sulfatase (558 aa).

Serine 101 carries the post-translational modification 3-oxoalanine (Ser).

It belongs to the sulfatase family. Post-translationally, the conversion to 3-oxoalanine (also known as C-formylglycine, FGly), of a serine or cysteine residue in prokaryotes and of a cysteine residue in eukaryotes, is critical for catalytic activity.

In terms of biological role, exosulfatase involved in the degradation of the glycosaminoglycan (GAG) heparan sulfate (HS). Catalyzes the hydrolysis of the 6-sulfate groups of the N-acetyl-D-glucosamine 6-sulfate units. GAG-specific sulfatases play a key role in the persistence of the major human gut symbiont B.thetaiotaomicron in the host gastrointestinal tract. This is N-acetylglucosamine-6-O-sulfatase from Bacteroides thetaiotaomicron (strain ATCC 29148 / DSM 2079 / JCM 5827 / CCUG 10774 / NCTC 10582 / VPI-5482 / E50).